Here is a 194-residue protein sequence, read N- to C-terminus: Probable chorismate pyruvate-lyase (194 aa).

Substrate-binding residues include Arg77, Leu115, and Glu176.

Belongs to the UbiC family.

The protein localises to the cytoplasm. The enzyme catalyses chorismate = 4-hydroxybenzoate + pyruvate. It participates in cofactor biosynthesis; ubiquinone biosynthesis. In terms of biological role, removes the pyruvyl group from chorismate, with concomitant aromatization of the ring, to provide 4-hydroxybenzoate (4HB) for the ubiquinone pathway. In Cupriavidus pinatubonensis (strain JMP 134 / LMG 1197) (Cupriavidus necator (strain JMP 134)), this protein is Probable chorismate pyruvate-lyase.